We begin with the raw amino-acid sequence, 267 residues long: Hydroxynaphthalene reductase-like protein Arp2 (267 aa).

Residues isoleucine 25, asparagine 45, aspartate 71, and asparagine 98 each coordinate NADP(+). Active-site proton donor residues include serine 147 and serine 148. The NADP(+) site is built by tyrosine 162, lysine 166, valine 195, and threonine 197. Catalysis depends on tyrosine 162, which acts as the Proton acceptor. The active-site Lowers pKa of active site Tyr is the lysine 166.

It belongs to the short-chain dehydrogenases/reductases (SDR) family.

Its function is as follows. Hydroxynaphthalene reductase-like protein; part of the Pks2 gene cluster that mediates the formation of infectious structures (appressoria), enabling these fungi to kill insects faster. The product of the Pks2 gene cluster is different from the one of Pks1 and has still not been identified. This is Hydroxynaphthalene reductase-like protein Arp2 from Metarhizium robertsii (strain ARSEF 23 / ATCC MYA-3075) (Metarhizium anisopliae (strain ARSEF 23)).